A 479-amino-acid chain; its full sequence is Cyclin-dependent kinase F-1 (479 aa).

Residues 21-418 (YEIFERVGSG…TMEMLNDKYL (398 aa)) enclose the Protein kinase domain. Residues 27-35 (VGSGAYADV) and K50 contribute to the ATP site. At Y32 the chain carries Phosphotyrosine. Catalysis depends on D146, which acts as the Proton acceptor. Phosphoserine occurs at positions 179, 208, and 247. A disordered region spans residues 187-221 (KLEDKDGETSEPPEVIPDYENSPRQGSDGQEREAM). Residue T290 is modified to Phosphothreonine. Positions 434 to 479 (PTMSGPDEDSPRKWNDYREMDSDSDFDGFGPMNVKPTSSGFTIEFP) are disordered. A compositionally biased stretch (basic and acidic residues) spans 442-454 (DSPRKWNDYREMD). The span at 468 to 479 (KPTSSGFTIEFP) shows a compositional bias: polar residues.

It belongs to the protein kinase superfamily. CMGC Ser/Thr protein kinase family. CDC2/CDKX subfamily. As to expression, highly expressed in suspension cell culture. Expressed at low levels in all plant organs.

It catalyses the reaction L-seryl-[protein] + ATP = O-phospho-L-seryl-[protein] + ADP + H(+). The enzyme catalyses L-threonyl-[protein] + ATP = O-phospho-L-threonyl-[protein] + ADP + H(+). The catalysed reaction is [DNA-directed RNA polymerase] + ATP = phospho-[DNA-directed RNA polymerase] + ADP + H(+). Functionally, CDK-activating kinase that modulates CDKD-2 and CDKD-3 activities by phosphorylation of the T-loop. Activates CDKD-2 C-terminal domain (CTD) kinase activity. Activates CDKA-1 probably by phosphorylation. Possesses a CDK kinase activity independently of association with cyclin CYCH1-1. Phosphorylates the CTD of the large subunit of RNA polymerase II. In Arabidopsis thaliana (Mouse-ear cress), this protein is Cyclin-dependent kinase F-1 (CDKF-1).